The chain runs to 320 residues: Adhesin MafA 3 (320 aa).

An N-terminal signal peptide occupies residues 1-18 (MQARLLIPILFSVFILSA). Cys19 carries N-palmitoyl cysteine lipidation. Cys19 is lipidated: S-diacylglycerol cysteine. The span at 288 to 298 (HTGNSAPSVET) shows a compositional bias: polar residues. The interval 288–320 (HTGNSAPSVETDNSHEGYGYSDEVVRQHRQGQP) is disordered.

This sequence belongs to the MafA family.

The protein localises to the cell outer membrane. The protein is Adhesin MafA 3 (mafA3) of Neisseria meningitidis serogroup C / serotype 2a (strain ATCC 700532 / DSM 15464 / FAM18).